The chain runs to 180 residues: Protein C2-DOMAIN ABA-RELATED 10 (180 aa).

The region spanning 1–105 (MDQKPLGLLT…EALKMGMELL (105 aa)) is the C2 domain. Positions 22, 23, 28, 74, 75, 76, and 82 each coordinate Ca(2+).

The protein belongs to the plant CAR protein family. As to quaternary structure, binds to PYR/PYL/RCAR abscisic acid intracellular receptors in an ABA-independent manner, both at the plasma membrane and in the nucleus.

The protein resides in the cell membrane. It is found in the nucleus. In terms of biological role, stimulates the GTPase/ATPase activities of Obg-like ATPases. Mediates the transient calcium-dependent interaction of PYR/PYL/RCAR abscisic acid (ABA) receptors with the plasma membrane and thus regulates ABA sensitivity. The protein is Protein C2-DOMAIN ABA-RELATED 10 of Arabidopsis thaliana (Mouse-ear cress).